We begin with the raw amino-acid sequence, 270 residues long: Urease accessory protein UreD (270 aa).

Belongs to the UreD family. In terms of assembly, ureD, UreF and UreG form a complex that acts as a GTP-hydrolysis-dependent molecular chaperone, activating the urease apoprotein by helping to assemble the nickel containing metallocenter of UreC. The UreE protein probably delivers the nickel.

It is found in the cytoplasm. Functionally, required for maturation of urease via the functional incorporation of the urease nickel metallocenter. This chain is Urease accessory protein UreD, found in Microcystis aeruginosa (strain NIES-843 / IAM M-2473).